We begin with the raw amino-acid sequence, 89 residues long: Cytochrome c oxidase subunit 7A, mitochondrial (89 aa).

Residues 1–31 (MMNLSRAVVRSFATTAGRRSAAVPKDQIEKG) constitute a mitochondrion transit peptide. The Mitochondrial matrix portion of the chain corresponds to 32–58 (YFEIRKVQEHFQKKDGKPVFLKGSVVD). Residues 59-81 (NVLYRVTVALALVGIGGMGKLFY) form a helical membrane-spanning segment. Topologically, residues 82–89 (ELSVPKKE) are mitochondrial intermembrane.

It belongs to the cytochrome c oxidase VIIa family. Component of the cytochrome c oxidase (complex IV, CIV), a multisubunit enzyme composed of a catalytic core of 3 subunits and several supernumerary subunits. The complex exists as a monomer or a dimer and forms supercomplexes (SCs) in the inner mitochondrial membrane with ubiquinol-cytochrome c oxidoreductase (cytochrome b-c1 complex, complex III, CIII).

It localises to the mitochondrion inner membrane. Its pathway is energy metabolism; oxidative phosphorylation. Functionally, component of the cytochrome c oxidase, the last enzyme in the mitochondrial electron transport chain which drives oxidative phosphorylation. The respiratory chain contains 3 multisubunit complexes succinate dehydrogenase (complex II, CII), ubiquinol-cytochrome c oxidoreductase (cytochrome b-c1 complex, complex III, CIII) and cytochrome c oxidase (complex IV, CIV), that cooperate to transfer electrons derived from NADH and succinate to molecular oxygen, creating an electrochemical gradient over the inner membrane that drives transmembrane transport and the ATP synthase. Cytochrome c oxidase is the component of the respiratory chain that catalyzes the reduction of oxygen to water. Electrons originating from reduced cytochrome c in the intermembrane space (IMS) are transferred via the dinuclear copper A center (CU(A)) of subunit 2 and heme A of subunit 1 to the active site in subunit 1, a binuclear center (BNC) formed by heme A3 and copper B (CU(B)). The BNC reduces molecular oxygen to 2 water molecules using 4 electrons from cytochrome c in the IMS and 4 protons from the mitochondrial matrix. This Drosophila melanogaster (Fruit fly) protein is Cytochrome c oxidase subunit 7A, mitochondrial.